A 145-amino-acid polypeptide reads, in one-letter code: uncharacterized protein (145 aa).

The protein to R.meliloti R00649.

This is an uncharacterized protein from Agrobacterium fabrum (strain C58 / ATCC 33970) (Agrobacterium tumefaciens (strain C58)).